The chain runs to 195 residues: Probable GTP-binding protein EngB (195 aa).

Residues 24 to 195 (DWPEIALAGR…EAWTAILKYL (172 aa)) form the EngB-type G domain. Residues 32 to 39 (GRSNVGKS), 59 to 63 (GKTQL), 77 to 80 (DVPG), 144 to 147 (TKAD), and 176 to 178 (FSS) each bind GTP. Residues Ser-39 and Thr-61 each coordinate Mg(2+).

This sequence belongs to the TRAFAC class TrmE-Era-EngA-EngB-Septin-like GTPase superfamily. EngB GTPase family. Requires Mg(2+) as cofactor.

Its function is as follows. Necessary for normal cell division and for the maintenance of normal septation. This Lactococcus lactis subsp. cremoris (strain MG1363) protein is Probable GTP-binding protein EngB.